Here is a 165-residue protein sequence, read N- to C-terminus: Short form salivary protein D7R4 (165 aa).

An N-terminal signal peptide occupies residues 1–21; the sequence is MIRQVITSYFLTVCLLALVQG. Cystine bridges form between Cys-27–Cys-59, Cys-40–Cys-165, and Cys-98–Cys-117. Glu-28 and Arg-43 together coordinate noradrenaline. A serotonin-binding site is contributed by Glu-28. Serotonin contacts are provided by His-56, Tyr-115, Asp-132, and Glu-135. Tyr-115, Asp-132, and Glu-135 together coordinate histamine. Residues Tyr-115, Asp-132, and Glu-135 each contribute to the tryptamine site. Asp-132 and Glu-135 together coordinate noradrenaline.

It belongs to the PBP/GOBP family. In terms of tissue distribution, female saliva (at protein level). Female salivary gland. Not detected in female carcass without salivary glands. Not detected in male tissues.

It is found in the secreted. Modulates blood feeding of female mosquitoes on vertebrate species by binding and sequestering different mediators involved in the host response. Binds serotonin, noradrenaline, histamine and tryptamine. Inhibits histamine-, serotonin- and partially noradrenaline-induced smooth muscle contraction. Exhibits vasodilating activity. This Anopheles gambiae (African malaria mosquito) protein is Short form salivary protein D7R4.